Reading from the N-terminus, the 418-residue chain is MSKTVHVIGAGISGLAAAIRLARAGLTVHVHEAMQQAGGRCRSYFDAQTGLVIDNGNHLLLSGNHAACEYARTIGTEAGLVGPERAEFDFIDLPANARWRLKLGGGKLPLWLFDANSRVPDTSIGDYLGLMPLLWAPTTKLIGDTINCSGPLYDRLVAPLLLAALNVDPPEGSAGLAGAVVRETLLAGGKACRPLIARDGLSAVLVEPAVAQLAARGPGVQFGHELRALTPAGDRVGALQFGGEDVVTLGPDDAVVLAVPPRPAASLLPGLKTPQEYRAIVNAHFNYAPPPGMPALTGVIGGVVEWLFAFPNRLSVTISNGDRLVDAPREQLAAEIWGEICKIAGISANLPPWQIVRERRATFAATPAQNALRPGPVTQWRNLYLAGDWTDTGLPATIEGSVRSGNRAADLVLAAGRA.

This sequence belongs to the HpnE family.

The enzyme catalyses squalene + FAD + H2O + H(+) = hydroxysqualene + FADH2. The protein operates within secondary metabolite biosynthesis; hopanoid biosynthesis. Its function is as follows. Involved in the biosynthesis of the hopanoid precursor squalene (SQ) from farnesyl diphosphate (FPP). Catalyzes the third (last) step, the reduction of hydroxysqualene (HSQ) to SQ. The polypeptide is Hydroxysqualene dehydroxylase (Rhodopseudomonas palustris (strain ATCC BAA-98 / CGA009)).